A 155-amino-acid polypeptide reads, in one-letter code: Riboflavin kinase (155 aa).

Residues G15, K21, T27, and N29 each coordinate ATP. T27 and N29 together coordinate Mg(2+). E79 serves as the catalytic Nucleophile. Positions 82, 84, and 91 each coordinate ATP. 3 residues coordinate FMN: R104, K107, and F109.

As to quaternary structure, monomer. Directly interacts with TNFRSF1A death domain. TNFRSF1A-binding may be supported by TRADD. In the absence of TNFRSF1A, interacts with TRADD. Independently of TNFRSF1A, interacts with the NADPH oxidase subunit CYBA. Zn(2+) serves as cofactor. Requires Mg(2+) as cofactor. In terms of tissue distribution, detected in brain, placenta and urinary bladder.

The protein localises to the cytoplasm. The enzyme catalyses riboflavin + ATP = FMN + ADP + H(+). The protein operates within cofactor biosynthesis; FMN biosynthesis; FMN from riboflavin (ATP route): step 1/1. Its function is as follows. Catalyzes the phosphorylation of riboflavin (vitamin B2) to form flavin-mononucleotide (FMN), hence rate-limiting enzyme in the synthesis of FAD. Essential for TNF-induced reactive oxygen species (ROS) production. Through its interaction with both TNFRSF1A and CYBA, physically and functionally couples TNFRSF1A to NADPH oxidase. TNF-activation of RFK may enhance the incorporation of FAD in NADPH oxidase, a critical step for the assembly and activation of NADPH oxidase. The polypeptide is Riboflavin kinase (RFK) (Homo sapiens (Human)).